The sequence spans 165 residues: Peptidyl-prolyl cis-trans isomerase-like 1 (165 aa).

The PPIase cyclophilin-type domain maps to glutamate 3 to asparagine 157.

It belongs to the cyclophilin-type PPIase family. PPIL1 subfamily.

The enzyme catalyses [protein]-peptidylproline (omega=180) = [protein]-peptidylproline (omega=0). Functionally, PPIases accelerate the folding of proteins. It catalyzes the cis-trans isomerization of proline imidic peptide bonds in oligopeptides. The sequence is that of Peptidyl-prolyl cis-trans isomerase-like 1 (cyp3) from Rhizopus delemar (strain RA 99-880 / ATCC MYA-4621 / FGSC 9543 / NRRL 43880) (Mucormycosis agent).